Here is a 563-residue protein sequence, read N- to C-terminus: Beta-catenin-like protein 1 (563 aa).

M1 carries the post-translational modification N-acetylmethionine. The tract at residues 1-81 is disordered; it reads MDVGELLSYQ…EEEEPLDESS (81 aa). The Nuclear localization signal signature appears at 16–33; it reads KRPRDDEEEELKTRRKQT. Basic and acidic residues predominate over residues 34–45; sequence GPRERGRYREDE. Acidic residues predominate over residues 66 to 78; that stretch reads DGEEEEEEEEPLD. HEAT repeat units lie at residues 79–129 and 134–176; these read ESSV…VVAT and YHLL…TLHE. K91 is modified (N6-acetyllysine). The short motif at 130–140 is the Nuclear export signal (NES) element; the sequence is MPDLYHLLVEL. 5 ARM repeats span residues 178-228, 229-273, 274-323, 325-363, and 364-417; these read EEGA…MAEF, RPEM…LQDN, DENR…CLML, SNRERFLKGEGLQLMNLMLREKKISRSSALKVLDHAMIG, and PEGA…LLRN. S389 bears the Phosphoserine mark. Positions 476 to 540 form a coiled coil; sequence DMEDEFYLRR…HIIKEYAENI (65 aa). S545 is subject to Phosphoserine.

In terms of assembly, component of the PRP19-CDC5L splicing complex composed of a core complex comprising a homotetramer of PRPF19, CDC5L, PLRG1 and BCAS2, and at least three less stably associated proteins CTNNBL1, CWC15 and HSPA8. Interacts directly with CWC15 and CDC5L in the complex. Interacts with AICDA; the interaction is important for the antibody diversification activity of AICDA. Interacts with PRPF31 (via its NLS). Interacts (via its N-terminal NLS) with KPNA1 and KPNA2.

The protein resides in the nucleus. Component of the PRP19-CDC5L complex that forms an integral part of the spliceosome and is required for activating pre-mRNA splicing. Participates in AID/AICDA-mediated somatic hypermutation (SHM) and class-switch recombination (CSR), 2 processes resulting in the production of high-affinity, mutated isotype-switched antibodies. In Rattus norvegicus (Rat), this protein is Beta-catenin-like protein 1 (Ctnnbl1).